Consider the following 398-residue polypeptide: MSKTTEIIRLTEQYGANNYHPLPVVLTKGEGVWVEDPEGNRYMDMLSAYSAVNQGHRHPKIIQALKEQADRITLTSRAFHNDQLGPWYEKVAKLTGKDMVLPMNTGAEAVETAFKAARRWAYDVKGVEKDKAEIIVCENNFHGRTMAAVSMSSSEEYKRGFGPMLPGIKIIPYGDVEALKKAITPNTAAFIFEPIQGEAGINIPPEGFLKEAYNVCKENNVLYIADEIQSGLGRSGKMFACDWENVVPDMYILGKALGGGVFPISCVAANRDILGVFNPGSHGSTFGGNPLACAVSIAALDVIIEEKLPERSLELGNYFIEKLREIQHPDIKEVRGRGLFIGVELHTSARPYCEKLKQEGLLCKETHDTVIRFAPPLVITKEELDWAIERVKKVFAGV.

Lys255 bears the N6-(pyridoxal phosphate)lysine mark.

It belongs to the class-III pyridoxal-phosphate-dependent aminotransferase family. OAT subfamily. The cofactor is pyridoxal 5'-phosphate.

It is found in the cytoplasm. The enzyme catalyses a 2-oxocarboxylate + L-ornithine = L-glutamate 5-semialdehyde + an L-alpha-amino acid. The protein operates within amino-acid biosynthesis; L-proline biosynthesis; L-glutamate 5-semialdehyde from L-ornithine: step 1/1. In terms of biological role, catalyzes the interconversion of ornithine to glutamate semialdehyde. The sequence is that of Ornithine aminotransferase from Geobacillus sp. (strain WCH70).